The chain runs to 236 residues: NEP1-interacting protein 1 (236 aa).

Residues 1–44 (MASSRFQSGFCPISSCPSLENFIERIKDACRFTLSAVLGTILSA) lie on the Lumenal, thylakoid side of the membrane. Residues 45-65 (VLTFFFALVGTLLGALTGALI) traverse the membrane as a helical segment. Topologically, residues 66-78 (GQETESGFIRGAA) are stromal. The helical transmembrane segment at 79–99 (VGAISGAVFSIEVFESSLVLW) threads the bilayer. At 100–104 (KSNES) the chain is on the lumenal, thylakoid side. The chain crosses the membrane as a helical span at residues 105–125 (RFGCLLYLIDVIVSLISGRLV). The Stromal portion of the chain corresponds to 126–236 (RERIGPAMLS…GSCPMCRRDL (111 aa)). The segment at 191 to 233 (CSVCLQDFQLGETVRSLPHCHHMFHLPCIDNWLFRHGSCPMCR) adopts an RING-type; atypical zinc-finger fold.

Belongs to the RING-type zinc finger family. NIP subfamily. As to quaternary structure, interacts with RPOT2.

The protein localises to the plastid. It is found in the chloroplast thylakoid membrane. In terms of biological role, intrinsic thylakoid membrane protein that fixes RPOT2 on the stromal side of the thylakoid membrane. This Arabidopsis thaliana (Mouse-ear cress) protein is NEP1-interacting protein 1 (NIP1).